A 128-amino-acid polypeptide reads, in one-letter code: MDTTESAESAHNPARPPSRSRCPPSAQPGSEGFWRPWVRTPGEKEKRTGPRAAEALPSGPGMAEASGKLLQYQHPVRLFWPKSKCYDYLYQEAETLLKNFPIQATISFYEDSDSEDEIEGLACENQSN.

The segment at 1–64 (MDTTESAESA…ALPSGPGMAE (64 aa)) is disordered. Residues 17–28 (PSRSRCPPSAQP) are compositionally biased toward low complexity. Positions 34–37 (WRPW) match the WRPW motif motif. The interval 74–109 (HPVRLFWPKSKCYDYLYQEAETLLKNFPIQATISFY) is ripply homology domain.

It belongs to the ripply family. Expressed in the embryonic anterior presomitic mesoderm. First expressed in S-I at 8.5 dpc, where expression is maintained until 13.5 dpc, with an additional stripe of expression sometimes seen in the rostral part of S0 and S-I.

The protein resides in the nucleus. Functionally, plays a role in somitogenesis. Required for somite segregation and establishment of rostrocaudal polarity in somites. The chain is Protein ripply2 from Mus musculus (Mouse).